A 337-amino-acid chain; its full sequence is uncharacterized protein (337 aa).

Residues 248-276 adopt a coiled-coil conformation; that stretch reads NELKAETTIQVLREQLRQEKKLKEQVLSL. The interval 285-337 is disordered; the sequence is GGRGEEFGKPDETPSSASVGDDNFPSSTNHTFEARRRPSSLSSGGALKPSKIL. Positions 287–296 are enriched in basic and acidic residues; the sequence is RGEEFGKPDE. Residues 297 to 315 show a composition bias toward polar residues; it reads TPSSASVGDDNFPSSTNHT.

This is an uncharacterized protein from Invertebrate iridescent virus 3 (IIV-3).